Here is a 188-residue protein sequence, read N- to C-terminus: Protease-associated domain-containing protein 1 (188 aa).

A signal peptide spans 1–21 (MSRGAAGWCCLVLWLPTCVAA). Residues 83-163 (IQDQIALVER…RSLEQHGLPW (81 aa)) form the PA domain. N121 and N171 each carry an N-linked (GlcNAc...) asparagine glycan.

In terms of processing, N-glycosylated; required for efficient secretion. As to expression, expressed in metabolically active tissues such as liver, muscle, adipose, and heart and different brain regions like cortex and hypothalamus, expression is acutely regulated by the nutritional state.

Its subcellular location is the secreted. Its function is as follows. Plays a role in the modulation of physical activity and adiposity. This Mus musculus (Mouse) protein is Protease-associated domain-containing protein 1.